A 127-amino-acid polypeptide reads, in one-letter code: MAPKAEKKPASKAPAAKKTTASTDASKKRTKTRKETYSSYIYKVLKQTHPDTGISQKSMSILNSFVNDIFERIASEASKLAAYNKKSTISAREIQTAVRLILPGELAKHAVSEGTRAVTKYSSSTQA.

A disordered region spans residues 1–35; the sequence is MAPKAEKKPASKAPAAKKTTASTDASKKRTKTRKE. An N6-acetyllysine; alternate mark is found at K7 and K8. Glycyl lysine isopeptide (Lys-Gly) (interchain with G-Cter in SUMO); alternate cross-links involve residues K7 and K8. Position 11 is a phosphoserine (S11). Residues 11–24 show a composition bias toward low complexity; sequence SKAPAAKKTTASTD. K12 carries the N6-acetyllysine modification. K120 participates in a covalent cross-link: Glycyl lysine isopeptide (Lys-Gly) (interchain with G-Cter in ubiquitin).

Belongs to the histone H2B family. The nucleosome is a histone octamer containing two molecules each of H2A, H2B, H3 and H4 assembled in one H3-H4 heterotetramer and two H2A-H2B heterodimers. The octamer wraps approximately 147 bp of DNA. Post-translationally, monoubiquitinated by the UBC2-BRE1 complex to form H2BK123ub1. H2BK123ub1 gives a specific tag for epigenetic transcriptional activation and is also prerequisite for H3K4me and H3K79me formation. H2BK123ub1 also modulates the formation of double-strand breaks during meiosis and is a prerequisite for DNA-damage checkpoint activation. In terms of processing, phosphorylated by STE20 to form H2BS10ph during progression through meiotic prophase. May be correlated with chromosome condensation. Acetylation of N-terminal lysines and particularly formation of H2BK11ac has a positive effect on transcription. Post-translationally, sumoylation to form H2BK6su or H2BK7su occurs preferentially near the telomeres and represses gene transcription.

It localises to the nucleus. Its subcellular location is the chromosome. In terms of biological role, core component of nucleosome. Nucleosomes wrap and compact DNA into chromatin, limiting DNA accessibility to the cellular machineries which require DNA as a template. Histones thereby play a central role in transcription regulation, DNA repair, DNA replication and chromosomal stability. DNA accessibility is regulated via a complex set of post-translational modifications of histones, also called histone code, and nucleosome remodeling. This chain is Histone H2B.2 (HTB2), found in Eremothecium gossypii (strain ATCC 10895 / CBS 109.51 / FGSC 9923 / NRRL Y-1056) (Yeast).